Reading from the N-terminus, the 311-residue chain is uncharacterized protein (311 aa).

10 helical membrane passes run 6–26 (IFILLTAIFYSTQEISGKMLA), 33–53 (PFQVMMIVFLIGAIILLPMAV), 70–90 (YLALCGILAVSISMSMLQFAV), 97–117 (TAAVLFCTNAVFTIPFAYFIL), 123–143 (GITIVSIIVSLIGVVIIFNPA), 155–175 (LIGICFALVAAVVWSLYTVIS), 185–205 (YVFNCISFFFGVIALLILLVV), 219–239 (ILVLLYMGIFIKAVGYICYLG), 244–264 (TSAVTASTVFLIKPALATVLA), and 265–285 (ILILGESIEVNVVIGIVFIII). EamA domains follow at residues 12 to 141 (AIFY…IIFN) and 166 to 292 (VVWS…INYS).

Belongs to the EamA transporter family.

The protein resides in the cell membrane. This is an uncharacterized protein from Clostridium kluyveri (strain ATCC 8527 / DSM 555 / NBRC 12016 / NCIMB 10680 / K1).